A 365-amino-acid chain; its full sequence is Heme A synthase (365 aa).

The next 5 helical transmembrane spans lie at 23–43, 109–129, 137–157, 172–192, and 208–228; these read LLRI…LVGG, LLAR…WLTG, LPLV…WWMV, LATH…ILRG, and GFAA…ALVA. H272 serves as a coordination point for heme. 3 consecutive transmembrane segments (helical) span residues 274 to 294, 303 to 323, and 327 to 347; these read LGAY…ARAL, AVLF…TLLM, and IHVA…SVAH. H333 is a heme binding site.

It belongs to the COX15/CtaA family. Type 2 subfamily. In terms of assembly, interacts with CtaB. Heme b is required as a cofactor.

It is found in the cell membrane. It carries out the reaction Fe(II)-heme o + 2 A + H2O = Fe(II)-heme a + 2 AH2. It participates in porphyrin-containing compound metabolism; heme A biosynthesis; heme A from heme O: step 1/1. Its function is as follows. Catalyzes the conversion of heme O to heme A by two successive hydroxylations of the methyl group at C8. The first hydroxylation forms heme I, the second hydroxylation results in an unstable dihydroxymethyl group, which spontaneously dehydrates, resulting in the formyl group of heme A. The sequence is that of Heme A synthase from Agrobacterium fabrum (strain C58 / ATCC 33970) (Agrobacterium tumefaciens (strain C58)).